A 195-amino-acid polypeptide reads, in one-letter code: Shikimate kinase (195 aa).

30–35 (GAGKTA) contributes to the ATP binding site. Residue T34 coordinates Mg(2+). The substrate site is built by D52, R76, and G98. R136 serves as a coordination point for ATP. R155 is a binding site for substrate.

Belongs to the shikimate kinase family. As to quaternary structure, monomer. Mg(2+) is required as a cofactor.

It localises to the cytoplasm. It carries out the reaction shikimate + ATP = 3-phosphoshikimate + ADP + H(+). The protein operates within metabolic intermediate biosynthesis; chorismate biosynthesis; chorismate from D-erythrose 4-phosphate and phosphoenolpyruvate: step 5/7. Catalyzes the specific phosphorylation of the 3-hydroxyl group of shikimic acid using ATP as a cosubstrate. This is Shikimate kinase from Ruegeria pomeroyi (strain ATCC 700808 / DSM 15171 / DSS-3) (Silicibacter pomeroyi).